The chain runs to 428 residues: Gamma-glutamyl phosphate reductase (428 aa).

Belongs to the gamma-glutamyl phosphate reductase family.

The protein localises to the cytoplasm. The catalysed reaction is L-glutamate 5-semialdehyde + phosphate + NADP(+) = L-glutamyl 5-phosphate + NADPH + H(+). It participates in amino-acid biosynthesis; L-proline biosynthesis; L-glutamate 5-semialdehyde from L-glutamate: step 2/2. Its function is as follows. Catalyzes the NADPH-dependent reduction of L-glutamate 5-phosphate into L-glutamate 5-semialdehyde and phosphate. The product spontaneously undergoes cyclization to form 1-pyrroline-5-carboxylate. The sequence is that of Gamma-glutamyl phosphate reductase from Streptomyces avermitilis (strain ATCC 31267 / DSM 46492 / JCM 5070 / NBRC 14893 / NCIMB 12804 / NRRL 8165 / MA-4680).